Reading from the N-terminus, the 318-residue chain is tRNA dimethylallyltransferase (318 aa).

16–23 is a binding site for ATP; that stretch reads GPTASGKS. 18–23 contributes to the substrate binding site; that stretch reads TASGKS. Interaction with substrate tRNA regions lie at residues 41-44 and 165-169; these read DSRQ and QRLIR.

The protein belongs to the IPP transferase family. Monomer. The cofactor is Mg(2+).

It catalyses the reaction adenosine(37) in tRNA + dimethylallyl diphosphate = N(6)-dimethylallyladenosine(37) in tRNA + diphosphate. Functionally, catalyzes the transfer of a dimethylallyl group onto the adenine at position 37 in tRNAs that read codons beginning with uridine, leading to the formation of N6-(dimethylallyl)adenosine (i(6)A). The protein is tRNA dimethylallyltransferase of Pelodictyon phaeoclathratiforme (strain DSM 5477 / BU-1).